The sequence spans 811 residues: Myb-like DNA-binding protein BAS1 (811 aa).

Residues 34 to 110 (HRKNGRNSWS…DVRKRWTGSL (77 aa)) enclose the Myb-like domain. 2 HTH myb-type domains span residues 111–165 (DPNL…GPGS) and 166–218 (KGRL…TMVV). 2 consecutive DNA-binding regions (H-T-H motif) follow at residues 138–161 (WLSISMDIPGRTEDQCAKRYIEVL) and 191–214 (WRKISSEMEFRPSLTCRNRWRKII). A compositionally biased stretch (basic and acidic residues) spans 237 to 264 (DMTDGKLRQHPIADSDIRSDSTPNKEEQ). Disordered stretches follow at residues 237–320 (DMTD…SAPP), 348–379 (SQMNKQSPGGISDSPQTSLPPAFNPASLDEHM), 535–713 (ATSH…LRDE), and 782–811 (LHNEAKKTSEHDMTSGGSTDNGSVLPLNPS). Positions 265–275 (LQLSQQNNPSL) are enriched in low complexity. Over residues 282-298 (NVKENESSKLPRLKDND) the composition is skewed to basic and acidic residues. Composition is skewed to polar residues over residues 348–366 (SQMNKQSPGGISDSPQTSL), 535–613 (ATSH…TSGS), and 653–664 (LNPSPNSVRSNG). Basic and acidic residues predominate over residues 782–794 (LHNEAKKTSEHDM).

As to quaternary structure, monomer.

It is found in the nucleus. In terms of biological role, activates HIS4 transcription only in combination with PHO2/BAS2. BAS1 is also involved in the regulation of the purine biosynthesis pathway. The polypeptide is Myb-like DNA-binding protein BAS1 (BAS1) (Saccharomyces cerevisiae (strain ATCC 204508 / S288c) (Baker's yeast)).